Consider the following 309-residue polypeptide: Acetylglutamate kinase (309 aa).

Residues 82 to 83, Arg-104, and Asn-206 contribute to the substrate site; that span reads GG.

The protein belongs to the acetylglutamate kinase family. ArgB subfamily.

It is found in the cytoplasm. The catalysed reaction is N-acetyl-L-glutamate + ATP = N-acetyl-L-glutamyl 5-phosphate + ADP. It participates in amino-acid biosynthesis; L-arginine biosynthesis; N(2)-acetyl-L-ornithine from L-glutamate: step 2/4. Catalyzes the ATP-dependent phosphorylation of N-acetyl-L-glutamate. The sequence is that of Acetylglutamate kinase from Cupriavidus metallidurans (strain ATCC 43123 / DSM 2839 / NBRC 102507 / CH34) (Ralstonia metallidurans).